Reading from the N-terminus, the 137-residue chain is NADH dehydrogenase [ubiquinone] 1 beta subcomplex subunit 7 (137 aa).

A lipid anchor (N-myristoyl glycine) is attached at Gly2. The CHCH domain maps to 56–98; the sequence is RDYCAHYLIRLLKCKRDSFPNFXACKQERHDWDYCEHRDYVMR. Positions 59–69 match the Cx9C motif 1 motif; sequence CAHYLIRLLKC. Disulfide bonds link Cys59-Cys90 and Cys69-Cys80. Ser73 carries the post-translational modification Phosphoserine. A Cx9C motif 2 motif is present at residues 80–90; the sequence is CKQERHDWDYC. The segment at 113–137 is disordered; it reads KRREKKAAELAKGQGPGEVDPKVAL.

The protein belongs to the complex I NDUFB7 subunit family. In terms of assembly, complex I is composed of 45 different subunits.

The protein localises to the mitochondrion inner membrane. Its subcellular location is the mitochondrion intermembrane space. In terms of biological role, accessory subunit of the mitochondrial membrane respiratory chain NADH dehydrogenase (Complex I), that is believed not to be involved in catalysis. Complex I functions in the transfer of electrons from NADH to the respiratory chain. The immediate electron acceptor for the enzyme is believed to be ubiquinone. This Pan troglodytes (Chimpanzee) protein is NADH dehydrogenase [ubiquinone] 1 beta subcomplex subunit 7 (NDUFB7).